The sequence spans 357 residues: Protein-glutamate methylesterase/protein-glutamine glutaminase (357 aa).

The Response regulatory domain maps to 3–120 (RVLVVDDSAF…SIDLYKVRDM (118 aa)). Asp-54 is subject to 4-aspartylphosphate. The 195-residue stretch at 161 to 355 (FRAGKQLICI…AAIMTYMKKE (195 aa)) folds into the CheB-type methylesterase domain. Active-site residues include Ser-173, His-200, and Asp-296.

This sequence belongs to the CheB family. Phosphorylated by CheA. Phosphorylation of the N-terminal regulatory domain activates the methylesterase activity.

The protein localises to the cytoplasm. It catalyses the reaction [protein]-L-glutamate 5-O-methyl ester + H2O = L-glutamyl-[protein] + methanol + H(+). The enzyme catalyses L-glutaminyl-[protein] + H2O = L-glutamyl-[protein] + NH4(+). Its function is as follows. Involved in chemotaxis. Part of a chemotaxis signal transduction system that modulates chemotaxis in response to various stimuli. Catalyzes the demethylation of specific methylglutamate residues introduced into the chemoreceptors (methyl-accepting chemotaxis proteins or MCP) by CheR. Also mediates the irreversible deamidation of specific glutamine residues to glutamic acid. The protein is Protein-glutamate methylesterase/protein-glutamine glutaminase of Bacillus licheniformis (strain ATCC 14580 / DSM 13 / JCM 2505 / CCUG 7422 / NBRC 12200 / NCIMB 9375 / NCTC 10341 / NRRL NRS-1264 / Gibson 46).